The chain runs to 164 residues: Endoribonuclease YbeY (164 aa).

Zn(2+)-binding residues include histidine 111, histidine 115, and histidine 121. Residues 142 to 164 form a disordered region; the sequence is GYPDPYADDETETSPTVTTKDSE. Polar residues predominate over residues 154–164; the sequence is TSPTVTTKDSE.

Belongs to the endoribonuclease YbeY family. Requires Zn(2+) as cofactor.

Its subcellular location is the cytoplasm. In terms of biological role, single strand-specific metallo-endoribonuclease involved in late-stage 70S ribosome quality control and in maturation of the 3' terminus of the 16S rRNA. In Pseudomonas fluorescens (strain Pf0-1), this protein is Endoribonuclease YbeY.